The chain runs to 619 residues: TOX high mobility group box family member 4 (619 aa).

Disordered stretches follow at residues 155–227, 304–335, and 436–458; these read LSLG…QKPV, ELDP…TESP, and LPPP…QQQV. At threonine 176 the chain carries Phosphothreonine. Serine 178 and serine 182 each carry phosphoserine. The segment covering 183 to 193 has biased composition (basic and acidic residues); that stretch reads LHEDGVDDFRR. Residues 208-218 show a composition bias toward basic residues; that stretch reads KQKAPKKRKKK. The Nuclear localization signal motif lies at 213-218; it reads KKRKKK. The HMG box DNA-binding region spans 223-291; the sequence is PQKPVSAYAL…EYLKALAAYK (69 aa). Threonine 313 bears the Phosphothreonine mark. Position 315 is a phosphoserine (serine 315). Low complexity predominate over residues 320-335; it reads TTADPASPAPASTESP. Residues 436 to 453 are compositionally biased toward pro residues; sequence LPPPRLQPPPLQQMPQPP. Residue arginine 479 is modified to Asymmetric dimethylarginine. A phosphoserine mark is found at serine 531, serine 548, serine 550, serine 558, serine 560, and serine 565.

As to quaternary structure, component of the PNUTS-PP1 phosphatase complex, composed of PPP1R10/PNUTS, TOX4, WDR82 and PPP1CA or PPP1CB or PPP1CC. Interacts with PPP1R10/PNUTS. Interacts with FOXO1 and CREB1 (increased by cAMP); FOXO1 and CREB1 are required for full induction of TOX4-dependent activity and the interactions are inhibited by insulin.

It localises to the nucleus. The protein localises to the chromosome. With respect to regulation, in liver, recruited to target gene promoters following treatment with dexamethasone and cAMP. Binding is decreased in presence of insulin. Transcription factor that modulates cell fate reprogramming from the somatic state to the pluripotent and neuronal fate. In liver, controls the expression of hormone-regulated gluconeogenic genes such as G6PC1 and PCK1. This regulation is independent of the insulin receptor activation. Also acts as a regulatory component of protein phosphatase 1 (PP1) complexes. Component of the PNUTS-PP1 protein phosphatase complex, a PP1 complex that regulates RNA polymerase II transcription pause-release. PNUTS-PP1 also plays a role in the control of chromatin structure and cell cycle progression during the transition from mitosis into interphase. The sequence is that of TOX high mobility group box family member 4 (Tox4) from Rattus norvegicus (Rat).